A 514-amino-acid polypeptide reads, in one-letter code: Membrane-bound lytic murein transglycosylase F (514 aa).

The N-terminal stretch at 1 to 30 (MKKLKINYLFIGILTLLLAAALWPSIPWFG) is a signal peptide. Residues 31 to 269 (KTENHIAAIQ…RIEEKYLGHG (239 aa)) form a non-LT domain region. The interval 270–514 (DDFDYVDTRS…LFTPQKKEEK (245 aa)) is LT domain. The active site involves Glu314.

This sequence in the N-terminal section; belongs to the bacterial solute-binding protein 3 family. The protein in the C-terminal section; belongs to the transglycosylase Slt family.

It is found in the cell outer membrane. It carries out the reaction Exolytic cleavage of the (1-&gt;4)-beta-glycosidic linkage between N-acetylmuramic acid (MurNAc) and N-acetylglucosamine (GlcNAc) residues in peptidoglycan, from either the reducing or the non-reducing ends of the peptidoglycan chains, with concomitant formation of a 1,6-anhydrobond in the MurNAc residue.. In terms of biological role, murein-degrading enzyme that degrades murein glycan strands and insoluble, high-molecular weight murein sacculi, with the concomitant formation of a 1,6-anhydromuramoyl product. Lytic transglycosylases (LTs) play an integral role in the metabolism of the peptidoglycan (PG) sacculus. Their lytic action creates space within the PG sacculus to allow for its expansion as well as for the insertion of various structures such as secretion systems and flagella. This is Membrane-bound lytic murein transglycosylase F from Salmonella paratyphi A (strain ATCC 9150 / SARB42).